The following is a 371-amino-acid chain: Leucine-rich repeat-containing protein 2 (371 aa).

LRR repeat units follow at residues 122–143 (HLREWYISNTLIQIIPTYIQLF), 145–166 (AMRILDLPKNQISHLPAEIGCL), 168–189 (NLKELNVGFNYLKSIPPELGDC), 191–214 (NLERLDCSGNLELMELPFELSNLK), 215–235 (QVTFVDISANKFSSVPICVLR), 238–260 (NLQWLDISSNNLTDLPQDIDRLE), 261–283 (ELQSFLLYKNKLTYLPYSMLNLK), 284–305 (KLTLLVVSGDHLVELPTALCDS), and 308–329 (PLKFVSLMDNPIDNAQCEDGNE).

This chain is Leucine-rich repeat-containing protein 2 (LRRC2), found in Homo sapiens (Human).